We begin with the raw amino-acid sequence, 90 residues long: Protein Z600 (90 aa).

A phosphothreonine mark is found at threonine 22 and threonine 48. The tract at residues 46-65 is disordered; the sequence is PATPSSSGHGKFQTELKKRR.

As to quaternary structure, component of the Frs-CycA-Cdk1 complex composed of Z600, CycA and Cdk1. Interacts preferentially with CycA (via C-terminus) but is also able to interact (via C-terminus) with CycE (via C-terminus).

It localises to the nucleus. Its function is as follows. Cell cycle regulator that is involved in modulating and adjusting cell proliferation according to the requirements of the developmental program. Interacts with mitotic Cdk1-cyclin complexes to inhibit mitotic entry at the G2/M transition. Likely to function by binding to the hydrophobic patch of cyclins to interfere with the interaction between the complex and certain Cdk1 substrates. At the mid-blastula transition, involved in the cell cycle arrest in G2 of cycle 14 by delaying mitosis and thus reducing cell proliferation allowing cell fate specification and morphogenesis to take place. Acts downstream or in parallel to the checkpoint regulator grp which is also required for the cell cycle pause at cycle 14. During gastrulation, delays mitosis in the ventral region of the embryonic mesoderm thus allowing invagination to be completed before cell division takes place. This Drosophila melanogaster (Fruit fly) protein is Protein Z600.